Consider the following 967-residue polypeptide: RNA polymerase-associated protein RapA (967 aa).

Residues 163–333 (EVGKRHNPRV…FARLRLLDPN (171 aa)) enclose the Helicase ATP-binding domain. 176-183 (DEVGLGKT) serves as a coordination point for ATP. The DEAH box motif lies at 279–282 (DEAH). The Helicase C-terminal domain occupies 489-660 (RVEWLLGFLT…NYLAQPNELG (172 aa)).

This sequence belongs to the SNF2/RAD54 helicase family. RapA subfamily. Interacts with the RNAP. Has a higher affinity for the core RNAP than for the holoenzyme. Its ATPase activity is stimulated by binding to RNAP.

Its function is as follows. Transcription regulator that activates transcription by stimulating RNA polymerase (RNAP) recycling in case of stress conditions such as supercoiled DNA or high salt concentrations. Probably acts by releasing the RNAP, when it is trapped or immobilized on tightly supercoiled DNA. Does not activate transcription on linear DNA. Probably not involved in DNA repair. The chain is RNA polymerase-associated protein RapA from Proteus mirabilis (strain HI4320).